Consider the following 457-residue polypeptide: D-inositol 3-phosphate glycosyltransferase (457 aa).

Residue H34 participates in 1D-myo-inositol 3-phosphate binding. UDP-N-acetyl-alpha-D-glucosamine is bound by residues 40–41 (QP) and G48. 1D-myo-inositol 3-phosphate contacts are provided by residues 45–50 (DAGGMN), K103, Y136, T160, and R180. The UDP-N-acetyl-alpha-D-glucosamine site is built by R267, K272, and V333. The Mg(2+) site is built by F342, R343, and A345. UDP-N-acetyl-alpha-D-glucosamine-binding residues include E355 and E363. T369 is a binding site for Mg(2+).

This sequence belongs to the glycosyltransferase group 1 family. MshA subfamily. In terms of assembly, homodimer.

It catalyses the reaction 1D-myo-inositol 3-phosphate + UDP-N-acetyl-alpha-D-glucosamine = 1D-myo-inositol 2-acetamido-2-deoxy-alpha-D-glucopyranoside 3-phosphate + UDP + H(+). Catalyzes the transfer of a N-acetyl-glucosamine moiety to 1D-myo-inositol 3-phosphate to produce 1D-myo-inositol 2-acetamido-2-deoxy-glucopyranoside 3-phosphate in the mycothiol biosynthesis pathway. The polypeptide is D-inositol 3-phosphate glycosyltransferase (Streptomyces coelicolor (strain ATCC BAA-471 / A3(2) / M145)).